The chain runs to 296 residues: Ribonuclease H2 subunit A (296 aa).

Residues 14–236 (PCLMGIDEAG…CTTHLKGEVE (223 aa)) form the RNase H type-2 domain. A divalent metal cation contacts are provided by Asp20, Glu21, and Asp127.

It belongs to the RNase HII family. Eukaryotic subfamily. Requires Mn(2+) as cofactor. Mg(2+) serves as cofactor.

The catalysed reaction is Endonucleolytic cleavage to 5'-phosphomonoester.. In terms of biological role, catalytic subunit of RNase HII, an endonuclease that specifically degrades the RNA of RNA:DNA hybrids. Participates in DNA replication, possibly by mediating the removal of lagging-strand Okazaki fragment RNA primers during DNA replication. Mediates the excision of single ribonucleotides from DNA:RNA duplexes. The polypeptide is Ribonuclease H2 subunit A (Arabidopsis thaliana (Mouse-ear cress)).